The chain runs to 278 residues: Putative cysteine-rich repeat secretory protein 19 (278 aa).

The N-terminal stretch at 1–32 is a signal peptide; it reads MYSSSSVSKRFVLVPIVVVVTTQLLLVRNVSS. 2 Gnk2-homologous domains span residues 39-147 and 160-267; these read YLHH…SLDT and PSAK…LYPF.

This sequence belongs to the cysteine-rich repeat secretory protein family.

The protein resides in the secreted. In Arabidopsis thaliana (Mouse-ear cress), this protein is Putative cysteine-rich repeat secretory protein 19 (CRRSP19).